Here is a 260-residue protein sequence, read N- to C-terminus: 3'-5' ssDNA/RNA exonuclease TatD (260 aa).

Residues glutamate 92, histidine 128, and histidine 153 each coordinate a divalent metal cation.

Belongs to the metallo-dependent hydrolases superfamily. TatD-type hydrolase family. TatD subfamily. As to quaternary structure, monomer. Mg(2+) is required as a cofactor.

The protein localises to the cytoplasm. Functionally, 3'-5' exonuclease that prefers single-stranded DNA and RNA. May play a role in the H(2)O(2)-induced DNA damage repair. The protein is 3'-5' ssDNA/RNA exonuclease TatD of Pectobacterium carotovorum subsp. carotovorum (strain PC1).